The chain runs to 114 residues: Gene 37 protein (114 aa).

In Mycobacterium (Mycobacteriophage L5), this protein is Gene 37 protein (37).